We begin with the raw amino-acid sequence, 401 residues long: Insertion element ISM1 uncharacterized 48.3 kDa protein (401 aa).

Functionally, this polypeptide is involved in transposition, and should therefore bind to nucleic acids. In Methanobrevibacter smithii, this protein is Insertion element ISM1 uncharacterized 48.3 kDa protein.